Here is a 166-residue protein sequence, read N- to C-terminus: Small ribosomal subunit protein uS4 (166 aa).

In terms of domain architecture, S4 RNA-binding spans 103–165 (RRLQTVVYKK…PTSPYFKKAQ (63 aa)).

The protein belongs to the universal ribosomal protein uS4 family. As to quaternary structure, part of the 30S ribosomal subunit. Contacts protein S5. The interaction surface between S4 and S5 is involved in control of translational fidelity.

One of the primary rRNA binding proteins, it binds directly to 16S rRNA where it nucleates assembly of the body of the 30S subunit. Its function is as follows. With S5 and S12 plays an important role in translational accuracy. This chain is Small ribosomal subunit protein uS4, found in Ignicoccus hospitalis (strain KIN4/I / DSM 18386 / JCM 14125).